We begin with the raw amino-acid sequence, 545 residues long: CTP synthase (545 aa).

The amidoligase domain stretch occupies residues 1 to 264; sequence MQYIVVTGGV…ITRLSKLLNM (264 aa). Ser-12 contacts CTP. Position 12 (Ser-12) interacts with UTP. 13–18 contributes to the ATP binding site; it reads GLGKGT. Tyr-53 serves as a coordination point for L-glutamine. Asp-70 provides a ligand contact to ATP. Positions 70 and 140 each coordinate Mg(2+). Residues 147–149, 185–190, and Arg-221 contribute to the CTP site; these read DIE and KTKPTQ. Residues 185-190 and Arg-221 contribute to the UTP site; that span reads KTKPTQ. In terms of domain architecture, Glutamine amidotransferase type-1 spans 294-527; that stretch reads YVDLHDAYIS…VEQALIFKHR (234 aa). L-glutamine is bound at residue Gly-347. The Nucleophile; for glutamine hydrolysis role is filled by Cys-374. L-glutamine contacts are provided by residues 375 to 378, Glu-398, and Arg-455; that span reads LGFQ. Catalysis depends on residues His-500 and Glu-502.

Belongs to the CTP synthase family. Homotetramer.

It catalyses the reaction UTP + L-glutamine + ATP + H2O = CTP + L-glutamate + ADP + phosphate + 2 H(+). It carries out the reaction L-glutamine + H2O = L-glutamate + NH4(+). The enzyme catalyses UTP + NH4(+) + ATP = CTP + ADP + phosphate + 2 H(+). Its pathway is pyrimidine metabolism; CTP biosynthesis via de novo pathway; CTP from UDP: step 2/2. Allosterically activated by GTP, when glutamine is the substrate; GTP has no effect on the reaction when ammonia is the substrate. The allosteric effector GTP functions by stabilizing the protein conformation that binds the tetrahedral intermediate(s) formed during glutamine hydrolysis. Inhibited by the product CTP, via allosteric rather than competitive inhibition. In terms of biological role, catalyzes the ATP-dependent amination of UTP to CTP with either L-glutamine or ammonia as the source of nitrogen. Regulates intracellular CTP levels through interactions with the four ribonucleotide triphosphates. The polypeptide is CTP synthase (Thermoplasma acidophilum (strain ATCC 25905 / DSM 1728 / JCM 9062 / NBRC 15155 / AMRC-C165)).